The sequence spans 483 residues: UDP-glycosyltransferase 85C1 (483 aa).

Residues serine 304, 360–361 (WC), 378–386 (HCGWGSIIE), and 400–403 (IGDQ) contribute to the UDP-alpha-D-glucose site.

It belongs to the UDP-glycosyltransferase family.

Functionally, may glycosylate diterpenes or flavonols in leaves. This is UDP-glycosyltransferase 85C1 from Stevia rebaudiana (Stevia).